The primary structure comprises 225 residues: Endoglucanase (225 aa).

A signal peptide spans 1 to 15; the sequence is MKVFVVLAAIVAIAN. The active-site Nucleophile is the aspartate 29. 7 cysteine pairs are disulfide-bonded: cysteine 30–cysteine 152, cysteine 31–cysteine 66, cysteine 35–cysteine 103, cysteine 50–cysteine 74, cysteine 104–cysteine 219, cysteine 106–cysteine 209, and cysteine 176–cysteine 187. Residue asparagine 55 is glycosylated (N-linked (GlcNAc...) asparagine). The active-site Proton donor is the aspartate 138.

The protein belongs to the glycosyl hydrolase 45 (cellulase K) family. Post-translationally, N- and O-glycosylated. Contains hybrid- and complex-type N-glycans.

Its subcellular location is the secreted. It carries out the reaction Endohydrolysis of (1-&gt;4)-beta-D-glucosidic linkages in cellulose, lichenin and cereal beta-D-glucans.. Activity is not affected by metal ions except Mn(2+), which reduces the activity by 40-50%. However, no significant change in activity in response to 1 mM EDTA. In terms of biological role, hydrolyzes carboxymethylcellulose (CMC). Also hydrolyzes lichenan and barley beta-1,4-D-glucan. CMC is hydrolyzed majorily to cellobiose (G2), cellotriose (G3) and cellotetraose (G4). Cellohexaose (G6) is hydrolyzed to G4 and G2 with traces of G3. Cellopentaose (G5) is completely hydrolyzed to G2 and G3, and G4 is partially hydrolyzed to G2. Does not hydrolyze G2 or G3. Does not hydrolyze crystalline cellulose, soluble starch, xylan, mannan or laminarin. The polypeptide is Endoglucanase (Cryptopygus antarcticus (Antarctic springtail)).